We begin with the raw amino-acid sequence, 352 residues long: Uroporphyrinogen decarboxylase (352 aa).

Residues 26–30 (RQAGR), Asp-76, Tyr-153, Ser-208, and His-323 contribute to the substrate site.

It belongs to the uroporphyrinogen decarboxylase family. As to quaternary structure, homodimer.

Its subcellular location is the cytoplasm. The enzyme catalyses uroporphyrinogen III + 4 H(+) = coproporphyrinogen III + 4 CO2. It participates in porphyrin-containing compound metabolism; protoporphyrin-IX biosynthesis; coproporphyrinogen-III from 5-aminolevulinate: step 4/4. In terms of biological role, catalyzes the decarboxylation of four acetate groups of uroporphyrinogen-III to yield coproporphyrinogen-III. This is Uroporphyrinogen decarboxylase from Synechococcus sp. (strain CC9605).